The sequence spans 293 residues: Homoserine kinase (293 aa).

Residue 84-94 (PLSRGLGSSSA) coordinates ATP.

Belongs to the GHMP kinase family. Homoserine kinase subfamily.

The protein localises to the cytoplasm. The enzyme catalyses L-homoserine + ATP = O-phospho-L-homoserine + ADP + H(+). Its pathway is amino-acid biosynthesis; L-threonine biosynthesis; L-threonine from L-aspartate: step 4/5. Its function is as follows. Catalyzes the ATP-dependent phosphorylation of L-homoserine to L-homoserine phosphate. In Nitratiruptor sp. (strain SB155-2), this protein is Homoserine kinase.